A 156-amino-acid polypeptide reads, in one-letter code: Aspartate 1-decarboxylase (156 aa).

The active-site Schiff-base intermediate with substrate; via pyruvic acid is S29. A Pyruvic acid (Ser) modification is found at S29. Substrate is bound at residue T61. Catalysis depends on Y62, which acts as the Proton donor. G77–A79 contacts substrate.

This sequence belongs to the PanD family. As to quaternary structure, heterooctamer of four alpha and four beta subunits. The cofactor is pyruvate. Post-translationally, is synthesized initially as an inactive proenzyme, which is activated by self-cleavage at a specific serine bond to produce a beta-subunit with a hydroxyl group at its C-terminus and an alpha-subunit with a pyruvoyl group at its N-terminus.

The protein localises to the cytoplasm. The enzyme catalyses L-aspartate + H(+) = beta-alanine + CO2. It participates in cofactor biosynthesis; (R)-pantothenate biosynthesis; beta-alanine from L-aspartate: step 1/1. Its function is as follows. Catalyzes the pyruvoyl-dependent decarboxylation of aspartate to produce beta-alanine. The polypeptide is Aspartate 1-decarboxylase (Rhodopirellula baltica (strain DSM 10527 / NCIMB 13988 / SH1)).